A 359-amino-acid chain; its full sequence is Glycerol-1-phosphate dehydrogenase [NAD(P)+] (359 aa).

Residues 107 to 111 (GRVID) and 129 to 132 (TAAS) contribute to the NAD(+) site. Asp-134 serves as a coordination point for substrate. Residue Ser-138 participates in NAD(+) binding. A substrate-binding site is contributed by Asp-181. Residues Asp-181 and His-261 each contribute to the Zn(2+) site. Substrate is bound at residue His-265. His-277 lines the Zn(2+) pocket.

This sequence belongs to the glycerol-1-phosphate dehydrogenase family. It depends on Zn(2+) as a cofactor.

It is found in the cytoplasm. The enzyme catalyses sn-glycerol 1-phosphate + NAD(+) = dihydroxyacetone phosphate + NADH + H(+). It carries out the reaction sn-glycerol 1-phosphate + NADP(+) = dihydroxyacetone phosphate + NADPH + H(+). It functions in the pathway membrane lipid metabolism; glycerophospholipid metabolism. Functionally, catalyzes the NAD(P)H-dependent reduction of dihydroxyacetonephosphate (DHAP or glycerone phosphate) to glycerol 1-phosphate (G1P). The G1P thus generated is used as the glycerophosphate backbone of phospholipids in the cellular membranes of Archaea. The protein is Glycerol-1-phosphate dehydrogenase [NAD(P)+] of Methanosphaerula palustris (strain ATCC BAA-1556 / DSM 19958 / E1-9c).